The primary structure comprises 389 residues: Large ribosomal subunit protein uL3 (389 aa).

It belongs to the universal ribosomal protein uL3 family. As to quaternary structure, component of the large ribosomal subunit. Mature ribosomes consist of a small (40S) and a large (60S) subunit. The 40S subunit contains about 32 different proteins and 1 molecule of RNA (18S). The 60S subunit contains 45 different proteins and 3 molecules of RNA (25S, 5.8S and 5S).

The protein resides in the cytoplasm. Its function is as follows. Component of the ribosome, a large ribonucleoprotein complex responsible for the synthesis of proteins in the cell. The small ribosomal subunit (SSU) binds messenger RNAs (mRNAs) and translates the encoded message by selecting cognate aminoacyl-transfer RNA (tRNA) molecules. The large subunit (LSU) contains the ribosomal catalytic site termed the peptidyl transferase center (PTC), which catalyzes the formation of peptide bonds, thereby polymerizing the amino acids delivered by tRNAs into a polypeptide chain. The nascent polypeptides leave the ribosome through a tunnel in the LSU and interact with protein factors that function in enzymatic processing, targeting, and the membrane insertion of nascent chains at the exit of the ribosomal tunnel. RPL3 plays a role in coordinating processes of accommodating the aminoacyl-tRNA in the PTC. This is Large ribosomal subunit protein uL3 from Candida albicans (strain SC5314 / ATCC MYA-2876) (Yeast).